The primary structure comprises 331 residues: Probable allantoicase (331 aa).

The protein belongs to the allantoicase family.

It carries out the reaction allantoate + H2O = (S)-ureidoglycolate + urea. Its pathway is nitrogen metabolism; (S)-allantoin degradation; (S)-ureidoglycolate from allantoate (aminidohydrolase route): step 1/1. The chain is Probable allantoicase from Stutzerimonas stutzeri (strain A1501) (Pseudomonas stutzeri).